Consider the following 554-residue polypeptide: 3-(3-hydroxy-phenyl)propionate/3-hydroxycinnamic acid hydroxylase (554 aa).

FAD-binding positions include 17-46 and 285-295; these read QVAIAGAGPVGLMMANYLGQMGIDVLVVEK and FRIDRVLLAGD.

It belongs to the PheA/TfdB FAD monooxygenase family. The cofactor is FAD.

It catalyses the reaction 3-(3-hydroxyphenyl)propanoate + NADH + O2 + H(+) = 3-(2,3-dihydroxyphenyl)propanoate + NAD(+) + H2O. It carries out the reaction (2E)-3-(3-hydroxyphenyl)prop-2-enoate + NADH + O2 + H(+) = (2E)-3-(2,3-dihydroxyphenyl)prop-2-enoate + NAD(+) + H2O. The protein operates within aromatic compound metabolism; 3-phenylpropanoate degradation. Functionally, catalyzes the insertion of one atom of molecular oxygen into position 2 of the phenyl ring of 3-(3-hydroxyphenyl)propionate (3-HPP) and hydroxycinnamic acid (3HCI). The protein is 3-(3-hydroxy-phenyl)propionate/3-hydroxycinnamic acid hydroxylase of Shigella sonnei (strain Ss046).